A 1227-amino-acid chain; its full sequence is Pentatricopeptide repeat-containing protein At5g15280, mitochondrial (1227 aa).

The N-terminal 31 residues, 1–31 (MLNLLSISSSSRLRFLNKVSSLTYHYSFAFF), are a transit peptide targeting the mitochondrion. PPR repeat units lie at residues 146–180 (LPQA…GDTM), 182–216 (NEGI…GLVP), 217–251 (LTSC…RAEL), 255–289 (NIDS…GCIL), 290–320 (NSSI…VKYE), 322–356 (DVFV…GFKQ), 357–391 (DEVT…GYKP), 392–426 (DVYS…GMML), 427–461 (SLST…GLIE), 527–561 (VLPE…GQKL), 562–597 (SRRS…AYQL), 598–632 (DGET…HHPI), 633–667 (DNVT…NWLP), 668–698 (DLND…VFIS), 703–737 (QSEA…GCIV), 738–772 (EQEV…KHIP), 773–800 (SLGS…AEQI), 802–836 (SSYV…GLSS), 837–871 (YNKI…NIIC), 872–906 (SVKS…ESNP), 908–942 (GVII…GVLP), 943–977 (DETT…GMKP), 978–1012 (NNRS…GWNL), 1014–1044 (SSVV…VTRN), 1047–1081 (MAPN…QSIP), 1082–1116 (GSSS…GLSP), 1117–1151 (SIST…GESP), and 1152–1186 (SQEM…GYEV).

The protein belongs to the PPR family. P subfamily.

The protein resides in the mitochondrion. In Arabidopsis thaliana (Mouse-ear cress), this protein is Pentatricopeptide repeat-containing protein At5g15280, mitochondrial.